A 635-amino-acid chain; its full sequence is Kelch-like protein 31 (635 aa).

One can recognise a BTB domain in the interval 74–138; the sequence is CDLTVATKSK…AYSGKLTLSL (65 aa). The BACK domain occupies 173-274; the sequence is CMYVVNIADT…TPQDLVSHVQ (102 aa). 6 Kelch repeats span residues 318-366, 367-420, 421-467, 469-514, 516-566, and 567-615; these read VLLT…VLDG, FLYV…TFNG, LLFA…VIDG, ILVS…TVGD, AYVL…TLNN, and KIYL…VVTI.

In terms of tissue distribution, strongly expressed in fast skeletal muscle, and weakly in heart. Not expressed in other tissues.

This chain is Kelch-like protein 31 (klhl31), found in Danio rerio (Zebrafish).